Reading from the N-terminus, the 53-residue chain is UPF0391 membrane protein Ent638_0536 (53 aa).

2 helical membrane-spanning segments follow: residues 4–24 (WGIIFLVIALIAAALGFGGLA) and 27–47 (AAWAAKLVFVVGIVLFLVSLF).

This sequence belongs to the UPF0391 family.

Its subcellular location is the cell membrane. The polypeptide is UPF0391 membrane protein Ent638_0536 (Enterobacter sp. (strain 638)).